The chain runs to 1321 residues: Bile salt export pump (1321 aa).

The Cytoplasmic portion of the chain corresponds to 1–62; sequence MSDSVILRSV…FSSSKDNWLM (62 aa). The 324-residue stretch at 62 to 385 folds into the ABC transmembrane type-1 1 domain; that stretch reads MFMGSVCALL…ASSCLEIFST (324 aa). Residues 63–83 traverse the membrane as a helical segment; the sequence is FMGSVCALLHGMAQPGMIIVF. Topologically, residues 84-147 are extracellular; that stretch reads GILTDIFVEY…VIKFSGIYAG (64 aa). N-linked (GlcNAc...) asparagine glycans are attached at residues Asn109, Asn116, Asn122, and Asn125. A helical transmembrane segment spans residues 148-168; sequence VGVAVLILGYFQIRLWVITGA. Residues 169 to 215 lie on the Cytoplasmic side of the membrane; sequence RQIRKMRKFYFRRIMRMEIGWFDCTSVGELNSRFSDDINKIDEAIAD. The helical transmembrane segment at 216–236 threads the bilayer; the sequence is QMALFLQRLSTALSGLLLGFY. Over 237 to 240 the chain is Extracellular; sequence RGWK. The chain crosses the membrane as a helical span at residues 241 to 261; that stretch reads LTLVILAVSPLIGIGAAVIGL. Residues 262–319 are Cytoplasmic-facing; that stretch reads SVAKFTELELKAYAKAGSIADEVLSSIRTVAAFGGENKEVERYEKNLMFAQRWGIWKG. Residues 320-340 form a helical membrane-spanning segment; it reads MVMGFFTGYMWCLIFFCYALA. The Extracellular segment spans residues 341–353; that stretch reads FWYGSRLVLDEGE. A helical membrane pass occupies residues 354–374; that stretch reads YTPGTLIQIFLCVIIAAMNIG. Topologically, residues 375 to 755 are cytoplasmic; that stretch reads NASSCLEIFS…KYNISEWPYI (381 aa). One can recognise an ABC transporter 1 domain in the interval 420–656; that stretch reads IEFHNVTFHY…KGVYFMLVTL (237 aa). 455-462 contributes to the ATP binding site; it reads GSSGAGKS. Thr586 carries the phosphothreonine modification. Ser587 is subject to Phosphoserine. Positions 651–674 are interaction with HAX1; it reads FMLVTLQSQEDNTHKETGIKGKDT. Residues 662–684 show a composition bias toward basic and acidic residues; it reads NTHKETGIKGKDTTEGDTPERTF. The interval 662–722 is disordered; the sequence is NTHKETGIKG…PLAIGDHKSS (61 aa). A phosphoserine mark is found at Ser692, Ser703, and Ser706. Residues 755 to 1043 form the ABC transmembrane type-1 2 domain; the sequence is ILVGALCAAI…TFSYTPSYAK (289 aa). A helical membrane pass occupies residues 756-776; sequence LVGALCAAINGAVTPIYSLLF. At 777–794 the chain is on the extracellular side; the sequence is SQILKTFSLVDKEQQRSE. Residues 795–815 traverse the membrane as a helical segment; the sequence is IYSMCLFFVILGCVSLFTQFL. Residues 816 to 869 lie on the Cytoplasmic side of the membrane; that stretch reads QGYNFAKSGELLTKRLRKFGFKAMLRQDIGWFDDLKNNPGVLTTRLATDASQVQ. 2 helical membrane-spanning segments follow: residues 870–890 and 891–911; these read GATG…FVAV and LIAF…FPFL. The Cytoplasmic segment spans residues 912-979; that stretch reads ALSGAVQTKM…SYKTAIRKAN (68 aa). The helical transmembrane segment at 980–1000 threads the bilayer; the sequence is VYGLCYAFSQGISFLANSAAY. The Extracellular segment spans residues 1001-1011; that stretch reads RYGGYLIVYED. A helical transmembrane segment spans residues 1012-1032; sequence LNFSYVFRVVSSIAMSATAVG. Over 1033–1321 the chain is Cytoplasmic; it reads RTFSYTPSYA…KLVITGAPIS (289 aa). Residues 1078–1316 enclose the ABC transporter 2 domain; that stretch reads IDFIDCKFTY…KGAYYKLVIT (239 aa). Residue 1113–1120 coordinates ATP; that stretch reads GSSGCGKS. Ser1321 carries the phosphoserine modification.

It belongs to the ABC transporter superfamily. ABCB family. Multidrug resistance exporter (TC 3.A.1.201) subfamily. Interacts with HAX1. Interacts with the adapter protein complex 2 (AP-2) throught AP2A2 or AP2A1; this interaction regulates cell membrane expression of ABCB11 through its internalization in a clathrin-dependent manner and its subsequent degradation. Post-translationally, N-glycosylated. In terms of processing, ubiquitinated; short-chain ubiquitination regulates cell-Surface expression of ABCB11. As to expression, expressed predominantly, if not exclusively in the liver, where it was further localized to the canalicular microvilli and to subcanalicular vesicles of the hepatocytes by in situ.

It localises to the apical cell membrane. The protein localises to the recycling endosome membrane. It is found in the endosome. Its subcellular location is the cell membrane. The catalysed reaction is cholate(in) + ATP + H2O = cholate(out) + ADP + phosphate + H(+). It carries out the reaction taurocholate(in) + ATP + H2O = taurocholate(out) + ADP + phosphate + H(+). It catalyses the reaction glycocholate(in) + ATP + H2O = glycocholate(out) + ADP + phosphate + H(+). The enzyme catalyses glycochenodeoxycholate(in) + ATP + H2O = glycochenodeoxycholate(out) + ADP + phosphate + H(+). The catalysed reaction is taurochenodeoxycholate(in) + ATP + H2O = taurochenodeoxycholate(out) + ADP + phosphate + H(+). It carries out the reaction glycoursodeoxycholate(in) + ATP + H2O = glycoursodeoxycholate(out) + ADP + phosphate + H(+). It catalyses the reaction tauroursodeoxycholate(in) + ATP + H2O = tauroursodeoxycholate(out) + ADP + phosphate + H(+). The enzyme catalyses taurodeoxycholate(in) + ATP + H2O = taurodeoxycholate(out) + ADP + phosphate + H(+). The catalysed reaction is taurolithocholate 3-sulfate(in) + ATP + H2O = taurolithocholate 3-sulfate(out) + ADP + phosphate + H(+). It carries out the reaction pravastatin(in) + ATP + H2O = pravastatin(out) + ADP + phosphate + H(+). With respect to regulation, the uptake of taurocholate is inhibited by taurolithocholate sulfate with an IC(50) of 9 uM. Pravastatin competitively inhibits the transport of taurocholic acid. Cyclosporin A, glibenclamide, rifampicin and troglitazonestrongly competitively inhibit the transport activity of taurocholate. The canalicular transport activity of taurocholate is strongly dependent on canalicular membrane cholesterol content. The uptake of taurocholate is increased by short- and medium-chain fatty acids. Cholesterol increases transport capacity of taurocholate without affecting the affinity for the substrate. Its function is as follows. Catalyzes the transport of the major hydrophobic bile salts, such as taurine and glycine-conjugated cholic acid across the canalicular membrane of hepatocytes in an ATP-dependent manner, therefore participates in hepatic bile acid homeostasis and consequently to lipid homeostasis through regulation of biliary lipid secretion in a bile salts dependent manner. Transports taurine-conjugated bile salts more rapidly than glycine-conjugated bile salts. Also transports non-bile acid compounds, such as pravastatin and fexofenadine in an ATP-dependent manner and may be involved in their biliary excretion. The sequence is that of Bile salt export pump from Mus musculus (Mouse).